The primary structure comprises 408 residues: MADKSVKKVVLAYSGGLDTSIILKWLQTEYGAEVITFTADLGQGEEIEPARAKALAAGVKPENIFIEDVREEFVRDYVFPMFRANTVYEGQYLLGTSIARPLIAKKQIEIARKMGADAVSHGATGKGNDQVRFELGYYGLEPDITVIAPWREWDFKSREALLDFAEKHQIQITKDKRGEAPFSVDANLLHSSSEGKVLEDPAVEAPEFVHMRTIAPEDAPDAPTIITIDFEKGDPVAIDGVAMSPATLLTKLNELGRDNGVGRLDLVENRFVGMKSRGVYETPGGTILLAAHRGIESITLDRGAMHLKDELMPKYASLVYNGFWFSPEREMLQAAIDYSQDKVTGRVRVKLYKGNVTVIGRESPYSLYDQDLVTFEEGKVAYDHRDAGGFIKLNALRLRVLAKRDKRG.

ATP is bound by residues 12–20 and alanine 39; that span reads AYSGGLDTS. The L-citrulline site is built by tyrosine 92 and serine 97. Glycine 122 is an ATP binding site. Residues threonine 124, asparagine 128, and aspartate 129 each contribute to the L-aspartate site. Asparagine 128 serves as a coordination point for L-citrulline. L-citrulline-binding residues include arginine 132, serine 183, serine 192, glutamate 268, and tyrosine 280.

The protein belongs to the argininosuccinate synthase family. Type 1 subfamily. In terms of assembly, homotetramer.

It is found in the cytoplasm. The enzyme catalyses L-citrulline + L-aspartate + ATP = 2-(N(omega)-L-arginino)succinate + AMP + diphosphate + H(+). The protein operates within amino-acid biosynthesis; L-arginine biosynthesis; L-arginine from L-ornithine and carbamoyl phosphate: step 2/3. This Caulobacter vibrioides (strain ATCC 19089 / CIP 103742 / CB 15) (Caulobacter crescentus) protein is Argininosuccinate synthase.